The primary structure comprises 1290 residues: Nonribosomal peptide synthetase 6 (1290 aa).

A disordered region spans residues 1-27 (MTAIDVPWLSTPRRDNSHGTRSNSSCQ). The adenylation stretch occupies residues 260–657 (SYQELDCQAS…AQVEHHLRSC (398 aa)). Residues 775–851 (APETELERKL…GLAQTHRHPV (77 aa)) enclose the Carrier domain. Serine 812 carries the O-(pantetheine 4'-phosphoryl)serine modification. The segment at 846 to 870 (THRHPVRRAEVPRSSHDPDPFGRVR) is disordered. Basic and acidic residues predominate over residues 852–870 (RRAEVPRSSHDPDPFGRVR). The tract at residues 914–1162 (GGQLDPEQLR…PCMNIIPVRV (249 aa)) is condensation.

Belongs to the NRP synthetase family.

Nonribosomal peptide synthesis (NRPS) is a key mechanism responsible for the biosynthesis of bioactive metabolites which are potentially contributing to organismal virulence. This is Nonribosomal peptide synthetase 6 (NRPS6) from Aspergillus fumigatus (strain ATCC MYA-4609 / CBS 101355 / FGSC A1100 / Af293) (Neosartorya fumigata).